The chain runs to 157 residues: Probable cyclic pyranopterin monophosphate synthase (157 aa).

Substrate-binding positions include 75–77 (MCH) and 111–112 (ME). Asp-126 is an active-site residue.

Belongs to the MoaC family. In terms of assembly, homohexamer; trimer of dimers.

The enzyme catalyses (8S)-3',8-cyclo-7,8-dihydroguanosine 5'-triphosphate = cyclic pyranopterin phosphate + diphosphate. It functions in the pathway cofactor biosynthesis; molybdopterin biosynthesis. Functionally, catalyzes the conversion of (8S)-3',8-cyclo-7,8-dihydroguanosine 5'-triphosphate to cyclic pyranopterin monophosphate (cPMP). In Methanosarcina mazei (strain ATCC BAA-159 / DSM 3647 / Goe1 / Go1 / JCM 11833 / OCM 88) (Methanosarcina frisia), this protein is Probable cyclic pyranopterin monophosphate synthase.